Consider the following 334-residue polypeptide: Terpene synthase 1 (334 aa).

2 residues coordinate Mg(2+): Asp-82 and Asp-86. The D(D/E)XX(D/E) motif signature appears at 82–86; that stretch reads DDIFD. Arg-184 contacts substrate. Positions 230, 234, and 238 each coordinate Mg(2+). The NSE motif signature appears at 230 to 238; that stretch reads NDIYSYHRE. Positions 309 to 316 match the WxxxxxRY motif motif; sequence WSESCTRY.

Belongs to the terpene synthase family. Mg(2+) serves as cofactor.

It carries out the reaction (2E,6E)-farnesyl diphosphate = gamma-muurolene + diphosphate. The enzyme catalyses (2E,6E)-farnesyl diphosphate = alpha-muurolene + diphosphate. It catalyses the reaction (2E,6E)-farnesyl diphosphate = (-)-(E)-beta-caryophyllene + diphosphate. The catalysed reaction is (2E)-geranyl diphosphate = beta-myrcene + diphosphate. Terpene synthase that catalyzes the cyclization of farnesyl diphosphate (FPP) into a mixture of sesquiterpenes with gamma-muurolene as the most abundant compound and (-)-beta-caryophyllene, alpha-muurolene, and 4 unidentified sesquiterpenes as minor compoundss. TPS1 also shows monoterpene synthase activity and can also use geranyl diphosphate (GPP) as a substrate to convert it into a mixture of cyclic and acyclic monoterpenes, including myrcene and linalool. P.polycephalum has a unique biology and these volatile terpenoids could function in internal communication of P.polycephalum, to mark the territory that have been explored, or they may be involved in chemotaxis. This chain is Terpene synthase 1, found in Physarum polycephalum (Slime mold).